We begin with the raw amino-acid sequence, 205 residues long: Holliday junction branch migration complex subunit RuvA (205 aa).

The segment at 1–64 (MIGKLKGTID…EDQLKLFGFL (64 aa)) is domain I. Positions 65–143 (SALEREWFRL…AFVGEMAPSI (79 aa)) are domain II. The tract at residues 144 to 153 (GLKQELGEGV) is flexible linker. Residues 153-205 (VAAAPVSDAVSALTNLGYSRDQAANAVAAALKNGGEGADSARLIRLGLKELSR) form a domain III region.

The protein belongs to the RuvA family. Homotetramer. Forms an RuvA(8)-RuvB(12)-Holliday junction (HJ) complex. HJ DNA is sandwiched between 2 RuvA tetramers; dsDNA enters through RuvA and exits via RuvB. An RuvB hexamer assembles on each DNA strand where it exits the tetramer. Each RuvB hexamer is contacted by two RuvA subunits (via domain III) on 2 adjacent RuvB subunits; this complex drives branch migration. In the full resolvosome a probable DNA-RuvA(4)-RuvB(12)-RuvC(2) complex forms which resolves the HJ.

Its subcellular location is the cytoplasm. Functionally, the RuvA-RuvB-RuvC complex processes Holliday junction (HJ) DNA during genetic recombination and DNA repair, while the RuvA-RuvB complex plays an important role in the rescue of blocked DNA replication forks via replication fork reversal (RFR). RuvA specifically binds to HJ cruciform DNA, conferring on it an open structure. The RuvB hexamer acts as an ATP-dependent pump, pulling dsDNA into and through the RuvAB complex. HJ branch migration allows RuvC to scan DNA until it finds its consensus sequence, where it cleaves and resolves the cruciform DNA. This is Holliday junction branch migration complex subunit RuvA from Sinorhizobium medicae (strain WSM419) (Ensifer medicae).